Reading from the N-terminus, the 66-residue chain is Cell division protein FtsB (66 aa).

At 1 to 3 (MKM) the chain is on the cytoplasmic side. Residues 4-21 (LKIFLLFLLFWLQCSLWI) traverse the membrane as a helical segment. Topologically, residues 22–66 (GKNGILDYIKIYKKIIVQKKKNEDFQIRNNQLILEIERLNNAIKN) are extracellular. A coiled-coil region spans residues 38–66 (VQKKKNEDFQIRNNQLILEIERLNNAIKN).

The protein belongs to the FtsB family.

The protein resides in the cell membrane. Essential cell division protein. May link together the upstream cell division proteins, which are predominantly cytoplasmic, with the downstream cell division proteins, which are predominantly extracellular. The chain is Cell division protein FtsB from Buchnera aphidicola subsp. Schizaphis graminum (strain Sg).